A 212-amino-acid polypeptide reads, in one-letter code: External core antigen (212 aa).

An N-terminal signal peptide occupies residues 1 to 19 (MQLFHLCLIIFCSCPTVQA). Residues 25 to 27 (GWL) are HBEAG. Positions 165 to 212 (NAPILSTLPETTVVRQRGRAPRRRTPSPRRRRSQSPRRRRSQSPASQC) are disordered. Positions 180–205 (QRGRAPRRRTPSPRRRRSQSPRRRRS) are enriched in basic residues. Residues 184–190 (APRRRTP) form a 1; half-length repeat. The tract at residues 184 to 206 (APRRRTPSPRRRRSQSPRRRRSQ) is 3 X 8 AA repeats of S-P-R-R-R-R-S-Q. Residues 184–212 (APRRRTPSPRRRRSQSPRRRRSQSPASQC) constitute a propeptide that is removed on maturation. A run of 2 repeats spans residues 191-198 (SPRRRRSQ) and 199-206 (SPRRRRSQ).

It belongs to the orthohepadnavirus precore antigen family. As to quaternary structure, homodimerizes. In terms of processing, phosphorylated. Cleaved by host furin.

It is found in the secreted. Its subcellular location is the host nucleus. In terms of biological role, may regulate immune response to the intracellular capsid in acting as a T-cell tolerogen, by having an immunoregulatory effect which prevents destruction of infected cells by cytotoxic T-cells. This immune regulation may predispose to chronicity during perinatal infections and prevent severe liver injury during adult infections. The polypeptide is External core antigen (Hepatitis B virus genotype H subtype adw4 (isolate Nicaragua/2928Nic/1997) (HBV-H)).